The primary structure comprises 240 residues: Lipoprotein-releasing system ATP-binding protein LolD (240 aa).

One can recognise an ABC transporter domain in the interval 15–240; sequence IRAERLGKTY…GLRELTSAEV (226 aa). 51–58 lines the ATP pocket; the sequence is GASGAGKS.

This sequence belongs to the ABC transporter superfamily. Lipoprotein translocase (TC 3.A.1.125) family. In terms of assembly, the complex is composed of two ATP-binding proteins (LolD) and two transmembrane proteins (LolC and LolE).

It localises to the cell inner membrane. Its function is as follows. Part of the ABC transporter complex LolCDE involved in the translocation of mature outer membrane-directed lipoproteins, from the inner membrane to the periplasmic chaperone, LolA. Responsible for the formation of the LolA-lipoprotein complex in an ATP-dependent manner. This is Lipoprotein-releasing system ATP-binding protein LolD from Xylella fastidiosa (strain 9a5c).